The following is a 91-amino-acid chain: Small ribosomal subunit protein uS15c (91 aa).

Belongs to the universal ribosomal protein uS15 family. As to quaternary structure, part of the 30S ribosomal subunit.

Its subcellular location is the plastid. The protein localises to the chloroplast. The sequence is that of Small ribosomal subunit protein uS15c (rps15) from Eucalyptus globulus subsp. globulus (Tasmanian blue gum).